Reading from the N-terminus, the 267-residue chain is Hydroxyethylthiazole kinase (267 aa).

Residue Met46 coordinates substrate. ATP is bound by residues Arg122 and Thr168. Gly195 provides a ligand contact to substrate.

The protein belongs to the Thz kinase family. Requires Mg(2+) as cofactor.

The catalysed reaction is 5-(2-hydroxyethyl)-4-methylthiazole + ATP = 4-methyl-5-(2-phosphooxyethyl)-thiazole + ADP + H(+). The protein operates within cofactor biosynthesis; thiamine diphosphate biosynthesis; 4-methyl-5-(2-phosphoethyl)-thiazole from 5-(2-hydroxyethyl)-4-methylthiazole: step 1/1. In terms of biological role, catalyzes the phosphorylation of the hydroxyl group of 4-methyl-5-beta-hydroxyethylthiazole (THZ). The chain is Hydroxyethylthiazole kinase from Moorella thermoacetica (strain ATCC 39073 / JCM 9320).